The sequence spans 254 residues: Triosephosphate isomerase 2 (254 aa).

9-11 (NMK) contacts substrate. H96 functions as the Electrophile in the catalytic mechanism. Catalysis depends on E168, which acts as the Proton acceptor. Substrate contacts are provided by G174 and S212.

It belongs to the triosephosphate isomerase family. Homodimer.

The protein resides in the cytoplasm. It carries out the reaction D-glyceraldehyde 3-phosphate = dihydroxyacetone phosphate. It functions in the pathway polyol metabolism; glycerol degradation. Its function is as follows. Involved in the glycerol metabolism. Catalyzes stereospecifically the conversion of dihydroxyacetone phosphate (DHAP) to D-glyceraldehyde-3-phosphate (G3P). This chain is Triosephosphate isomerase 2, found in Listeria innocua serovar 6a (strain ATCC BAA-680 / CLIP 11262).